Consider the following 282-residue polypeptide: Glycine betaine/carnitine transport permease protein GbuB (282 aa).

Transmembrane regions (helical) follow at residues 44–64 (VFDL…TFWV), 70–90 (KWGL…LDFW), 99–119 (LVLT…IWMA), 140–160 (AFVY…PGVV), 220–240 (IMLA…GLGT), and 251–271 (AGGG…LDRL). Residues 93-272 (MTQTLTLVLT…IVAIILDRLT (180 aa)) form the ABC transmembrane type-1 domain.

This sequence belongs to the binding-protein-dependent transport system permease family. As to quaternary structure, the complex is composed of two ATP-binding proteins (GbuA), two transmembrane proteins (GbuB) and a solute-binding protein (GbuC).

It localises to the cell membrane. With respect to regulation, the complex is activated by an osmotic gradient or by low temperature. In terms of biological role, part of the ABC transporter complex GbuABC involved in glycine betaine uptake. Responsible for the translocation of the substrate across the membrane. Involved, with BetL and OpuC, in osmoprotection and cryoprotection of Listeria. Can also uptake carnitine when carnitine is abundant in the growth medium. This Listeria monocytogenes serotype 1/2a (strain 10403S) protein is Glycine betaine/carnitine transport permease protein GbuB (gbuB).